We begin with the raw amino-acid sequence, 20 residues long: Succinate--CoA ligase [ADP-forming] subunit beta, mitochondrial (20 aa).

One can recognise an ATP-grasp domain in the interval 8 to 20; that stretch reads SMELLQEAGVSIP.

The protein belongs to the succinate/malate CoA ligase beta subunit family. ATP-specific subunit beta subfamily. Heterodimer of an alpha and a beta subunit. The beta subunit determines specificity for ATP. Interacts with ALAS2.

Its subcellular location is the mitochondrion. The catalysed reaction is succinate + ATP + CoA = succinyl-CoA + ADP + phosphate. The protein operates within carbohydrate metabolism; tricarboxylic acid cycle; succinate from succinyl-CoA (ligase route): step 1/1. Functionally, ATP-specific succinyl-CoA synthetase functions in the citric acid cycle (TCA), coupling the hydrolysis of succinyl-CoA to the synthesis of ATP and thus represents the only step of substrate-level phosphorylation in the TCA. The beta subunit provides nucleotide specificity of the enzyme and binds the substrate succinate, while the binding sites for coenzyme A and phosphate are found in the alpha subunit. This is Succinate--CoA ligase [ADP-forming] subunit beta, mitochondrial from Canis lupus familiaris (Dog).